Here is an 830-residue protein sequence, read N- to C-terminus: Ent-cassa-12,15-diene synthase (830 aa).

Residues 1–50 are disordered; that stretch reads MMLLGSPSSGGYGGKFAGASPAGGTTTMAPSAKQPSSRAPPPGITGGRND. Over residues 23–37 the composition is skewed to polar residues; it reads GGTTTMAPSAKQPSS. Residues D577, D581, N721, and E729 each contribute to the Mg(2+) site. Residues 577–581 carry the DDXXD motif motif; the sequence is DDLFD.

Belongs to the terpene synthase family. Requires Mg(2+) as cofactor. Expressed in roots and stems.

The enzyme catalyses ent-copalyl diphosphate = ent-cassa-12,15-diene + diphosphate. In terms of biological role, involved in phytocassane phytoalexins biosynthesis. Catalyzes the conversion of ent-copalyl diphosphate to the phytoalexin precursor ent-cassa-12,15-diene. This chain is Ent-cassa-12,15-diene synthase (KSL7), found in Oryza sativa subsp. indica (Rice).